Reading from the N-terminus, the 546-residue chain is Delta-1-pyrroline-5-carboxylate dehydrogenase (546 aa).

An NAD(+)-binding site is contributed by 279–284 (KDISSN). E297 acts as the Proton acceptor in catalysis. C331 (nucleophile) is an active-site residue.

This sequence belongs to the aldehyde dehydrogenase family.

Its subcellular location is the cytoplasm. The enzyme catalyses L-glutamate 5-semialdehyde + NAD(+) + H2O = L-glutamate + NADH + 2 H(+). The protein operates within amino-acid degradation; L-proline degradation into L-glutamate; L-glutamate from L-proline: step 2/2. The polypeptide is Delta-1-pyrroline-5-carboxylate dehydrogenase (pruA) (Agaricus bisporus (White button mushroom)).